The chain runs to 234 residues: Large ribosomal subunit protein uL1 (234 aa).

It belongs to the universal ribosomal protein uL1 family. As to quaternary structure, part of the 50S ribosomal subunit.

Binds directly to 23S rRNA. The L1 stalk is quite mobile in the ribosome, and is involved in E site tRNA release. Its function is as follows. Protein L1 is also a translational repressor protein, it controls the translation of the L11 operon by binding to its mRNA. In Bdellovibrio bacteriovorus (strain ATCC 15356 / DSM 50701 / NCIMB 9529 / HD100), this protein is Large ribosomal subunit protein uL1.